The following is a 467-amino-acid chain: Uronate isomerase (467 aa).

This sequence belongs to the metallo-dependent hydrolases superfamily. Uronate isomerase family.

It catalyses the reaction D-glucuronate = D-fructuronate. The catalysed reaction is aldehydo-D-galacturonate = keto-D-tagaturonate. It participates in carbohydrate metabolism; pentose and glucuronate interconversion. The chain is Uronate isomerase from Clostridium acetobutylicum (strain ATCC 824 / DSM 792 / JCM 1419 / IAM 19013 / LMG 5710 / NBRC 13948 / NRRL B-527 / VKM B-1787 / 2291 / W).